The following is a 225-amino-acid chain: F-box protein SKIP27 (225 aa).

Residues 121–169 form the F-box domain; the sequence is KSRLECLPQDLLIRVICGVDHEDLKSLKLVSKSIREASLVAKTLHFAYT.

As to quaternary structure, part of a SCF (ASK-cullin-F-box) protein ligase complex. Interacts with SKP1A/ASK1 and SPK1B/ASK2.

It is found in the nucleus. It functions in the pathway protein modification; protein ubiquitination. Component of SCF(ASK-cullin-F-box) E3 ubiquitin ligase complexes, which may mediate the ubiquitination and subsequent proteasomal degradation of target proteins. The chain is F-box protein SKIP27 (SKIP27) from Arabidopsis thaliana (Mouse-ear cress).